A 126-amino-acid polypeptide reads, in one-letter code: KH homology domain-containing protein 1B (126 aa).

A KH domain is found at 19–78 (PLVFDMEEDQEDYIFGPDDEYLHTLEVHSNTLIQLERWFSPTGQTRVTVVGPLKARLWVM).

It belongs to the KHDC1 family.

This chain is KH homology domain-containing protein 1B (Khdc1b), found in Mus musculus (Mouse).